The primary structure comprises 162 residues: Phosphopantetheine adenylyltransferase (162 aa).

Ser11 is a substrate binding site. Residues 11–12 (SF) and His19 contribute to the ATP site. Substrate-binding residues include Lys43, Val76, and Arg90. Residues 91–93 (GLR), Glu101, and 126–132 (HLYISSS) contribute to the ATP site.

It belongs to the bacterial CoaD family. In terms of assembly, homohexamer. Requires Mg(2+) as cofactor.

The protein localises to the cytoplasm. The enzyme catalyses (R)-4'-phosphopantetheine + ATP + H(+) = 3'-dephospho-CoA + diphosphate. It functions in the pathway cofactor biosynthesis; coenzyme A biosynthesis; CoA from (R)-pantothenate: step 4/5. Its function is as follows. Reversibly transfers an adenylyl group from ATP to 4'-phosphopantetheine, yielding dephospho-CoA (dPCoA) and pyrophosphate. The protein is Phosphopantetheine adenylyltransferase of Streptococcus pneumoniae (strain JJA).